A 137-amino-acid chain; its full sequence is Putative pre-16S rRNA nuclease (137 aa).

This sequence belongs to the YqgF nuclease family.

Its subcellular location is the cytoplasm. Could be a nuclease involved in processing of the 5'-end of pre-16S rRNA. The chain is Putative pre-16S rRNA nuclease from Buchnera aphidicola subsp. Baizongia pistaciae (strain Bp).